Consider the following 338-residue polypeptide: Fructose-1,6-bisphosphatase class 1 1 (338 aa).

Residues Glu94, Asp116, Leu118, and Asp119 each coordinate Mg(2+). Residues 119–122, Asn210, and Lys276 contribute to the substrate site; that span reads DGSS. Glu282 provides a ligand contact to Mg(2+).

The protein belongs to the FBPase class 1 family. In terms of assembly, homotetramer. Mg(2+) is required as a cofactor.

The protein localises to the cytoplasm. The enzyme catalyses beta-D-fructose 1,6-bisphosphate + H2O = beta-D-fructose 6-phosphate + phosphate. Its pathway is carbohydrate biosynthesis; gluconeogenesis. The protein is Fructose-1,6-bisphosphatase class 1 1 of Paraburkholderia phymatum (strain DSM 17167 / CIP 108236 / LMG 21445 / STM815) (Burkholderia phymatum).